Reading from the N-terminus, the 480-residue chain is MSLFDHGVAKLHTLLKEGEVTVTDLVKESFDRIEATDDQIGAFLTLNEDAFEQAKRMDELAKMSDNPLFGMPIGVKDNIVTKGMRTTCASTFLENFVPAHDATVVERLHDAGALTIGKLNMDEFAMGSSNENSAFKPVRNPWDPTRVPGGSSGGSAASVAAGQVLFSLGSDTGGSIRQPAAYCGVVGMKPTYGLVSRFGLVAFASSLDQIGPLTRTVEDNAYLLNTIAGHCDMDSTSAEVEVPDYTAALNQDLTGMKFALPEEFMAEGVAPGVREQIEKAIETLKSLGATIETVSIPSVKYALSAYYLLASSEASSNLARFDGIRYGRRAEADTLDEVFTYSREQGFGDEVKRRIMLGTYALSSGYYDAFYKKAQQVRTLMKQDFAKVFEEYDAIVGPTAPTTAFKLGEQLDDPLTMYANDIMTIPVNLVGIPAISVPAGLSEGLPVGLQIIGNYFDESTLYRVAHAFEQANGGFKMPQL.

Active-site charge relay system residues include lysine 76 and serine 151. Serine 175 functions as the Acyl-ester intermediate in the catalytic mechanism.

The protein belongs to the amidase family. GatA subfamily. As to quaternary structure, heterotrimer of A, B and C subunits.

It carries out the reaction L-glutamyl-tRNA(Gln) + L-glutamine + ATP + H2O = L-glutaminyl-tRNA(Gln) + L-glutamate + ADP + phosphate + H(+). In terms of biological role, allows the formation of correctly charged Gln-tRNA(Gln) through the transamidation of misacylated Glu-tRNA(Gln) in organisms which lack glutaminyl-tRNA synthetase. The reaction takes place in the presence of glutamine and ATP through an activated gamma-phospho-Glu-tRNA(Gln). The polypeptide is Glutamyl-tRNA(Gln) amidotransferase subunit A (Exiguobacterium sp. (strain ATCC BAA-1283 / AT1b)).